The sequence spans 317 residues: Homoserine O-acetyltransferase (317 aa).

The active-site Acyl-thioester intermediate is Cys-142. Positions 163 and 192 each coordinate substrate. His-235 (proton acceptor) is an active-site residue. Glu-237 is a catalytic residue. Arg-249 serves as a coordination point for substrate.

The protein belongs to the MetA family.

It localises to the cytoplasm. It carries out the reaction L-homoserine + acetyl-CoA = O-acetyl-L-homoserine + CoA. It functions in the pathway amino-acid biosynthesis; L-methionine biosynthesis via de novo pathway; O-acetyl-L-homoserine from L-homoserine: step 1/1. Functionally, transfers an acetyl group from acetyl-CoA to L-homoserine, forming acetyl-L-homoserine. This chain is Homoserine O-acetyltransferase, found in Rhizorhabdus wittichii (strain DSM 6014 / CCUG 31198 / JCM 15750 / NBRC 105917 / EY 4224 / RW1) (Sphingomonas wittichii).